The primary structure comprises 458 residues: Putative long chain fatty acid-CoA ligase VraA (458 aa).

Belongs to the ATP-dependent AMP-binding enzyme family.

The chain is Putative long chain fatty acid-CoA ligase VraA (vraA) from Staphylococcus aureus (strain Mu3 / ATCC 700698).